Reading from the N-terminus, the 685-residue chain is Dammaradiene synthase (685 aa).

PFTB repeat units lie at residues 82 to 123 (MDKM…RLLN) and 265 to 308 (IREA…DPVV). Catalysis depends on Asp-400, which acts as the Proton donor. 2 PFTB repeats span residues 424–465 (ITRC…KAMV) and 621–672 (IGHG…ARYR).

This sequence belongs to the terpene cyclase/mutase family.

The enzyme catalyses squalene = dammara-20,24-diene. Functionally, squalene cyclase producing the tetracyclic triterpene dammaradiene. The polypeptide is Dammaradiene synthase (DCD) (Dryopteris crassirhizoma (Thick stemmed wood fern)).